A 400-amino-acid polypeptide reads, in one-letter code: uncharacterized protein (400 aa).

Residues 112 to 126 show a composition bias toward basic and acidic residues; sequence SESTAQIEKKPRKPL. A disordered region spans residues 112–151; sequence SESTAQIEKKPRKPLDSVGLLEGDRNKRKKSPQMNDFNIK.

This is an uncharacterized protein from Homo sapiens (Human).